Reading from the N-terminus, the 239-residue chain is Cysteine-rich venom protein natrin-1 (239 aa).

A signal peptide spans 1–18 (MIAFSLLCFAAVLQQSFG). In terms of domain architecture, SCP spans 37 to 165 (VDLHNSLRRR…AWSYFYVCQY (129 aa)). Cystine bridges form between Cys74–Cys152, Cys91–Cys166, Cys147–Cys163, Cys185–Cys192, Cys188–Cys197, Cys201–Cys234, Cys210–Cys228, and Cys219–Cys232. Positions 201–234 (CTIYNKLTNCDSLLKQSSCQDDWIKSNCPASCFC) constitute a ShKT domain.

In terms of tissue distribution, expressed by the venom gland.

The protein localises to the secreted. Inhibits calcium-activated potassium channels (KCa1.1/KCNMA1), voltage-gated potassium channel Kv1.3/KCNA3, and the calcium release channel/ryanodine receptor (RyR). Binds specifically to type 1 RyR (RyR1) from skeletal muscle. Inhibit both the binding of ryanodine to RyR1, and RyR1's calcium-channel activity. Inhibits carbachol-induced muscle contraction and weakly blocks muscle contraction evoked by potassium. The protein is Cysteine-rich venom protein natrin-1 of Naja atra (Chinese cobra).